The sequence spans 157 residues: SsrA-binding protein (157 aa).

Positions 130–157 (HDKRQDMAKKDSQRRIQKELGQRQKGME) are disordered. Over residues 132–157 (KRQDMAKKDSQRRIQKELGQRQKGME) the composition is skewed to basic and acidic residues.

Belongs to the SmpB family.

It is found in the cytoplasm. In terms of biological role, required for rescue of stalled ribosomes mediated by trans-translation. Binds to transfer-messenger RNA (tmRNA), required for stable association of tmRNA with ribosomes. tmRNA and SmpB together mimic tRNA shape, replacing the anticodon stem-loop with SmpB. tmRNA is encoded by the ssrA gene; the 2 termini fold to resemble tRNA(Ala) and it encodes a 'tag peptide', a short internal open reading frame. During trans-translation Ala-aminoacylated tmRNA acts like a tRNA, entering the A-site of stalled ribosomes, displacing the stalled mRNA. The ribosome then switches to translate the ORF on the tmRNA; the nascent peptide is terminated with the 'tag peptide' encoded by the tmRNA and targeted for degradation. The ribosome is freed to recommence translation, which seems to be the essential function of trans-translation. The protein is SsrA-binding protein of Alkaliphilus metalliredigens (strain QYMF).